A 207-amino-acid chain; its full sequence is Ras-related protein Rab-8B (207 aa).

Residues serine 17, glycine 18, valine 19, glycine 20, lysine 21, threonine 22, cysteine 23, threonine 35, serine 39, and threonine 40 each contribute to the GTP site. Residue threonine 22 coordinates Mg(2+). 2 consecutive short sequence motifs (switch) follow at residues 31–45 (DAFN…GIDF) and 63–80 (DTAG…YYRG). Residues threonine 40 and aspartate 63 each contribute to the Mg(2+) site. Glycine 66 contributes to the GTP binding site. Threonine 72 carries the post-translational modification Phosphothreonine. Residues asparagine 121, lysine 122, aspartate 124, alanine 152, and lysine 153 each coordinate GTP. 2 positions are modified to phosphoserine: serine 180 and serine 183. The residue at position 204 (cysteine 204) is a Cysteine methyl ester. Residue cysteine 204 is the site of S-geranylgeranyl cysteine attachment. Positions 205–207 (LLL) are cleaved as a propeptide — removed in mature form.

Belongs to the small GTPase superfamily. Rab family. In terms of assembly, associated with actin, delta-catenin and alpha and beta tubulins. Interacts with OTOF. Interacts with PEX5R. Interacts with RAB3IP. Interacts with VIM. Interacts with CDH1. Interacts with MICALL2. Interacts with GDI1, GDI2, CHML and CHM; phosphorylation at Thr-72 disrupts these interactions. Interacts with MICAL1. The cofactor is Mg(2+). Phosphorylation of Thr-72 in the switch II region by LRRK2 prevents the association of RAB regulatory proteins, including CHM, CHML and RAB GDP dissociation inhibitors GDI1 and GDI2.

The protein localises to the cell membrane. The protein resides in the cytoplasmic vesicle. Its subcellular location is the phagosome membrane. It is found in the endosome membrane. The enzyme catalyses GTP + H2O = GDP + phosphate + H(+). Regulated by guanine nucleotide exchange factors (GEFs) including RAB3IP/RABIN8 which promotes the exchange of bound GDP for free GTP. Regulated by GTPase activating proteins (GAPs) which increase the GTP hydrolysis activity. Inhibited by GDP dissociation inhibitors (GDIs). Its function is as follows. The small GTPases Rab are key regulators of intracellular membrane trafficking, from the formation of transport vesicles to their fusion with membranes. Rabs cycle between an inactive GDP-bound form and an active GTP-bound form that is able to recruit to membranes different sets of downstream effectors directly responsible for vesicle formation, movement, tethering and fusion. RAB8B may be involved in polarized vesicular trafficking and neurotransmitter release. May participate in cell junction dynamics in Sertoli cells. May also participate in the export of a subset of neosynthesized proteins through a Rab8-Rab10-Rab11-dependent endososomal export route. This is Ras-related protein Rab-8B (RAB8B) from Bos taurus (Bovine).